A 163-amino-acid polypeptide reads, in one-letter code: Nucleotide-binding protein MAP_4063c (163 aa).

It belongs to the YajQ family.

Nucleotide-binding protein. The protein is Nucleotide-binding protein MAP_4063c of Mycolicibacterium paratuberculosis (strain ATCC BAA-968 / K-10) (Mycobacterium paratuberculosis).